The following is a 1340-amino-acid chain: Iron-sulfur cluster assembly protein SufD (1340 aa).

The segment covering 477-487 (NSLKHNNNNTK) has biased composition (low complexity). Disordered regions lie at residues 477–498 (NSLKHNNNNTKPSSQKYEERSS), 723–743 (HGKDNTQHDDKNNPNFRNYLN), 765–794 (NVSTDEKRETQYDVKGNNPDTETNNEQSTV), 835–865 (EKNESNEGKGNDLDATEQRENEQVGPNGEKK), and 992–1055 (NIPT…NNIQ). Basic and acidic residues predominate over residues 723–734 (HGKDNTQHDDKN). A compositionally biased stretch (polar residues) spans 782–794 (NPDTETNNEQSTV). The span at 1022–1037 (DNLLQNDQATNSNVEI) shows a compositional bias: polar residues.

It belongs to the iron-sulfur cluster assembly SufBD family. In terms of assembly, component of a complex composed of SufB, SufC and SufD in a stoichiometric ratio of 1:2:1. Interacts with SufB. Interacts with SufC; the interaction enhances the ATPase activity of SufC.

Its subcellular location is the plastid. The protein localises to the apicoplast. It participates in cofactor biosynthesis; iron-sulfur cluster biosynthesis. In terms of biological role, participates in the sulfur mobilization (SUF) pathway for iron-sulfur (Fe-S) cluster biogenesis. As part of a complex consisting of SufB-SufC(2)-SufD, involved in assembly of [4Fe-4S] clusters. Enhances the ATPase activity of SufC. The protein is Iron-sulfur cluster assembly protein SufD of Plasmodium berghei (strain Anka).